Consider the following 227-residue polypeptide: Small ribosomal subunit protein uS3 (227 aa).

Positions Val-39–Arg-107 constitute a KH type-2 domain.

Belongs to the universal ribosomal protein uS3 family. As to quaternary structure, part of the 30S ribosomal subunit. Forms a tight complex with proteins S10 and S14.

Binds the lower part of the 30S subunit head. Binds mRNA in the 70S ribosome, positioning it for translation. The polypeptide is Small ribosomal subunit protein uS3 (Coxiella burnetii (strain CbuK_Q154) (Coxiella burnetii (strain Q154))).